The sequence spans 175 residues: Cytochrome c homolog (175 aa).

Residues 1–8 (MTGKELNK) lie on the Cytoplasmic side of the membrane. The helical; Signal-anchor transmembrane segment at 9-29 (IVAAILFASLIAMIVRFVANI) threads the bilayer. At 30–175 (LYKPNLQVLN…LFLKNYVHDK (146 aa)) the chain is on the periplasmic side. Positions 84, 87, 88, and 150 each coordinate heme c.

The protein belongs to the cytochrome c family. In terms of processing, binds 1 heme c group covalently per subunit.

The protein resides in the cell membrane. Functionally, may be involved in electron transfer from bc1 complex to aa3. This is Cytochrome c homolog (cycM) from Rickettsia typhi (strain ATCC VR-144 / Wilmington).